A 407-amino-acid chain; its full sequence is MRGGLWQLGQSITRRLGQSDKKTIVRRCYASEADLKKTVLYDFHVAHGGKMVPFAGWSMPIQYKDSIMDSTINCRENGSLFDVSHMCGLSLKGKDCVAFLEKLVVADVAGLAPGTGSLTVFTNEKGGAIDDSVITKVTDDHIYLVVNAGCRDKDLAHIEEHMKAFKAKGGDVSWHIYDERSLLALQGPLAGSTLQHLTKEDLSKMYFGDFRIIDINGSKCFLTRTGYTGEDGFEISVPSENAVDLAKAILEKSEGKVRLTGLGARDSLRLEAGLCLYGNDMEQHITPVEAGLTWAIGKRRRAEGGFLGADVILKQIADGPAIRRVGLFSTGPPARSHSEIQNEKGENIGEVTSGGFSPCLKKNIGMGYVKSGLHKPGTKLKIVIRGKTYEGSVTKMPFVPTKYYKPA.

Residues 1-29 (MRGGLWQLGQSITRRLGQSDKKTIVRRCY) constitute a mitochondrion transit peptide. Residues glutamate 234, arginine 265, and tyrosine 403 each contribute to the substrate site.

This sequence belongs to the GcvT family. The glycine cleavage system is composed of four proteins: P, T, L and H.

It localises to the mitochondrion. The enzyme catalyses N(6)-[(R)-S(8)-aminomethyldihydrolipoyl]-L-lysyl-[protein] + (6S)-5,6,7,8-tetrahydrofolate = N(6)-[(R)-dihydrolipoyl]-L-lysyl-[protein] + (6R)-5,10-methylene-5,6,7,8-tetrahydrofolate + NH4(+). In terms of biological role, the glycine cleavage system catalyzes the degradation of glycine. In Flaveria anomala (Yellowtops), this protein is Aminomethyltransferase, mitochondrial (GDCST).